A 275-amino-acid polypeptide reads, in one-letter code: Trans-aconitate 2-methyltransferase (275 aa).

Belongs to the methyltransferase superfamily. Tam family.

It is found in the cytoplasm. The catalysed reaction is trans-aconitate + S-adenosyl-L-methionine = (E)-3-(methoxycarbonyl)pent-2-enedioate + S-adenosyl-L-homocysteine. Catalyzes the S-adenosylmethionine monomethyl esterification of trans-aconitate. The polypeptide is Trans-aconitate 2-methyltransferase (Pseudomonas aeruginosa (strain ATCC 15692 / DSM 22644 / CIP 104116 / JCM 14847 / LMG 12228 / 1C / PRS 101 / PAO1)).